Here is a 295-residue protein sequence, read N- to C-terminus: Indole-3-glycerol phosphate synthase (295 aa).

It belongs to the TrpC family.

The catalysed reaction is 1-(2-carboxyphenylamino)-1-deoxy-D-ribulose 5-phosphate + H(+) = (1S,2R)-1-C-(indol-3-yl)glycerol 3-phosphate + CO2 + H2O. The protein operates within amino-acid biosynthesis; L-tryptophan biosynthesis; L-tryptophan from chorismate: step 4/5. The protein is Indole-3-glycerol phosphate synthase of Synechococcus sp. (strain ATCC 27144 / PCC 6301 / SAUG 1402/1) (Anacystis nidulans).